Reading from the N-terminus, the 446-residue chain is Anthranilate N-benzoyltransferase protein 2 (446 aa).

Residues His-164 and Asp-393 each act as proton acceptor in the active site.

Belongs to the plant acyltransferase family. In terms of processing, N-terminus is blocked.

The catalysed reaction is anthranilate + benzoyl-CoA = N-benzoylanthranilate + CoA. It participates in phytoalexin biosynthesis; methoxydianthramide B biosynthesis. Catalyzes the formation of N-benzoylanthranilate, in the course of methoxydianthramide B, a phytoalexin. Phytoalexins are produced in response to infection by parasites, and are essential for the expression of disease resistance. This is Anthranilate N-benzoyltransferase protein 2 (HCBT2) from Dianthus caryophyllus (Carnation).